A 284-amino-acid chain; its full sequence is uncharacterized protein (284 aa).

Residues 1–24 form the signal peptide; that stretch reads MLYSRESRTTVLFLALVTSLTVLC. The Cytoplasmic segment spans residues 25-84; that stretch reads HSVDVTTVFTTSTITEITTVTAAPQPQNKAETALNTATNIIQTMQFLFNCAPFKWKGPLK. Residues 85 to 104 traverse the membrane as a helical segment; the sequence is ITSCALNFIVLLLTAWGYLL. Residues 105-284 are Extracellular-facing; that stretch reads KYLQENKLNS…SVHMYSSSLL (180 aa). N-linked (GlcNAc...) asparagine glycosylation occurs at asparagine 270.

This sequence to yeast YNL033w.

It is found in the cell membrane. This is an uncharacterized protein from Saccharomyces cerevisiae (strain ATCC 204508 / S288c) (Baker's yeast).